The primary structure comprises 220 residues: Vesicle-associated membrane protein 7 (220 aa).

A2 carries the post-translational modification N-acetylalanine. The Cytoplasmic segment spans residues 2–188 (AILFAVVARG…ARAMCMKNIK (187 aa)). One can recognise a Longin domain in the interval 7-110 (VVARGTTILA…AMNSEFSSVL (104 aa)). The v-SNARE coiled-coil homology domain occupies 125 to 185 (KVMETQAQVD…RNLARAMCMK (61 aa)). Residues S167 and S168 each carry the phosphoserine modification. The chain crosses the membrane as a helical; Anchor for type IV membrane protein span at residues 189–209 (LTIIIIIVSIVFIYIIVSLLC). At 210–220 (GGFTWPNCVKK) the chain is on the vesicular side.

The protein belongs to the synaptobrevin family. As to quaternary structure, component of the SNARE complex composed of STX4, SNAP23 and VAMP7 that binds SYT7 during lysosomal exocytosis. Component of the SNARE complex composed of STX7, STX8, VAMP7 and VTI1B that is required for heterotypic fusion of late endosomes with lysosomes. May interact with STX17. Interacts with PICALM. Interacts with RAB21.

It localises to the cytoplasmic vesicle. The protein localises to the secretory vesicle membrane. Its subcellular location is the golgi apparatus. It is found in the trans-Golgi network membrane. The protein resides in the late endosome membrane. It localises to the lysosome membrane. The protein localises to the endoplasmic reticulum membrane. Its subcellular location is the phagosome membrane. It is found in the synapse. The protein resides in the synaptosome. Its function is as follows. Involved in the targeting and/or fusion of transport vesicles to their target membrane during transport of proteins from the early endosome to the lysosome. Required for heterotypic fusion of late endosomes with lysosomes and homotypic lysosomal fusion. Required for calcium regulated lysosomal exocytosis. Involved in the export of chylomicrons from the endoplasmic reticulum to the cis Golgi. Required for exocytosis of mediators during eosinophil and neutrophil degranulation, and target cell killing by natural killer cells. Required for focal exocytosis of late endocytic vesicles during phagosome formation. The chain is Vesicle-associated membrane protein 7 (Vamp7) from Mus musculus (Mouse).